Consider the following 271-residue polypeptide: Zinc finger CCHC domain-containing protein 9 (271 aa).

Residues 1–67 (MTRWARVTTS…RKKNKKKKEY (67 aa)) are disordered. The segment covering 7 to 20 (VTTSNSKRPLSATS) has biased composition (polar residues). Residues 22-33 (EDMKKGSVERAD) are compositionally biased toward basic and acidic residues. Positions 35–46 (SLPNRKQCQSSR) are enriched in polar residues. The segment covering 56 to 65 (AKRKKNKKKK) has biased composition (basic residues). 4 consecutive CCHC-type zinc fingers follow at residues 128-145 (MVCF…DCPA), 155-172 (GICY…KCRA), 184-201 (AKCF…SCPD), and 211-228 (GSCK…DCRE).

As to expression, detected in brain cortex and in testis.

The protein localises to the nucleus. It localises to the nucleolus. Its function is as follows. May down-regulate transcription mediated by NF-kappa-B and the serum response element. This Mus musculus (Mouse) protein is Zinc finger CCHC domain-containing protein 9 (Zcchc9).